Consider the following 86-residue polypeptide: Protein Tat (86 aa).

Positions 1–21 (MDPVDPNLEPWNHPGSQPKTA) are disordered. The segment at 1-24 (MDPVDPNLEPWNHPGSQPKTACNR) is interaction with human CREBBP. Residues 1–48 (MDPVDPNLEPWNHPGSQPKTACNRCHCKKCCYHCQVCFITKGLGISYG) are transactivation. The Zn(2+) site is built by C22, C25, and C27. The interval 22 to 37 (CNRCHCKKCCYHCQVC) is cysteine-rich. K28 is subject to N6-acetyllysine; by host PCAF. Residues C30, H33, C34, and C37 each contribute to the Zn(2+) site. Positions 38-48 (FITKGLGISYG) are core. The tract at residues 47 to 86 (YGRKKRRQRRRPSQGGQTHQDPIPKQPSSQPRGNPTGPKE) is disordered. Over residues 48-58 (GRKKRRQRRRP) the composition is skewed to basic residues. A Nuclear localization signal, RNA-binding (TAR), and protein transduction motif is present at residues 49–57 (RKKRRQRRR). The tract at residues 49–86 (RKKRRQRRRPSQGGQTHQDPIPKQPSSQPRGNPTGPKE) is interaction with the host capping enzyme RNGTT. 2 positions are modified to N6-acetyllysine; by host EP300 and GCN5L2: K50 and K51. Asymmetric dimethylarginine; by host PRMT6 is present on residues R52 and R53. The span at 60 to 79 (QGGQTHQDPIPKQPSSQPRG) shows a compositional bias: polar residues. K71 participates in a covalent cross-link: Glycyl lysine isopeptide (Lys-Gly) (interchain with G-Cter in ubiquitin).

This sequence belongs to the lentiviruses Tat family. In terms of assembly, interacts with host CCNT1. Associates with the P-TEFb complex composed at least of Tat, P-TEFb (CDK9 and CCNT1), TAR RNA, RNA Pol II. Recruits the HATs CREBBP, TAF1/TFIID, EP300, PCAF and GCN5L2. Interacts with host KAT5/Tip60; this interaction targets the latter to degradation. Interacts with the host deacetylase SIRT1. Interacts with host capping enzyme RNGTT; this interaction stimulates RNGTT. Binds to host KDR, and to the host integrins ITGAV/ITGB3 and ITGA5/ITGB1. Interacts with host KPNB1/importin beta-1 without previous binding to KPNA1/importin alpha-1. Interacts with EIF2AK2. Interacts with host nucleosome assembly protein NAP1L1; this interaction may be required for the transport of Tat within the nucleus, since the two proteins interact at the nuclear rim. Interacts with host C1QBP/SF2P32; this interaction involves lysine-acetylated Tat. Interacts with the host chemokine receptors CCR2, CCR3 and CXCR4. Interacts with host DPP4/CD26; this interaction may trigger an anti-proliferative effect. Interacts with host LDLR. Interacts with the host extracellular matrix metalloproteinase MMP1. Interacts with host PRMT6; this interaction mediates Tat's methylation. Interacts with, and is ubiquitinated by MDM2/Hdm2. Interacts with host PSMC3 and HTATIP2. Interacts with STAB1; this interaction may overcome SATB1-mediated repression of IL2 and IL2RA (interleukin) in T cells by binding to the same domain than HDAC1. Interacts (when acetylated) with human CDK13, thereby increasing HIV-1 mRNA splicing and promoting the production of the doubly spliced HIV-1 protein Nef. Interacts with host TBP; this interaction modulates the activity of transcriptional pre-initiation complex. Interacts with host RELA. Interacts with host PLSCR1; this interaction negatively regulates Tat transactivation activity by altering its subcellular distribution. Post-translationally, asymmetrical arginine methylation by host PRMT6 seems to diminish the transactivation capacity of Tat and affects the interaction with host CCNT1. In terms of processing, acetylation by EP300, CREBBP, GCN5L2/GCN5 and PCAF regulates the transactivation activity of Tat. EP300-mediated acetylation of Lys-50 promotes dissociation of Tat from the TAR RNA through the competitive binding to PCAF's bromodomain. In addition, the non-acetylated Tat's N-terminus can also interact with PCAF. PCAF-mediated acetylation of Lys-28 enhances Tat's binding to CCNT1. Lys-50 is deacetylated by SIRT1. Polyubiquitination by host MDM2 does not target Tat to degradation, but activates its transactivation function and fosters interaction with CCNT1 and TAR RNA. Post-translationally, phosphorylated by EIF2AK2 on serine and threonine residues adjacent to the basic region important for TAR RNA binding and function. Phosphorylation of Tat by EIF2AK2 is dependent on the prior activation of EIF2AK2 by dsRNA.

The protein localises to the host nucleus. The protein resides in the host nucleolus. Its subcellular location is the host cytoplasm. It localises to the secreted. In terms of biological role, transcriptional activator that increases RNA Pol II processivity, thereby increasing the level of full-length viral transcripts. Recognizes a hairpin structure at the 5'-LTR of the nascent viral mRNAs referred to as the transactivation responsive RNA element (TAR) and recruits the cyclin T1-CDK9 complex (P-TEFb complex) that will in turn hyperphosphorylate the RNA polymerase II to allow efficient elongation. The CDK9 component of P-TEFb and other Tat-activated kinases hyperphosphorylate the C-terminus of RNA Pol II that becomes stabilized and much more processive. Other factors such as HTATSF1/Tat-SF1, SUPT5H/SPT5, and HTATIP2 are also important for Tat's function. Besides its effect on RNA Pol II processivity, Tat induces chromatin remodeling of proviral genes by recruiting the histone acetyltransferases (HATs) CREBBP, EP300 and PCAF to the chromatin. This also contributes to the increase in proviral transcription rate, especially when the provirus integrates in transcriptionally silent region of the host genome. To ensure maximal activation of the LTR, Tat mediates nuclear translocation of NF-kappa-B by interacting with host RELA. Through its interaction with host TBP, Tat may also modulate transcription initiation. Tat can reactivate a latently infected cell by penetrating in it and transactivating its LTR promoter. In the cytoplasm, Tat is thought to act as a translational activator of HIV-1 mRNAs. Its function is as follows. Extracellular circulating Tat can be endocytosed by surrounding uninfected cells via the binding to several surface receptors such as CD26, CXCR4, heparan sulfate proteoglycans (HSPG) or LDLR. Neurons are rarely infected, but they internalize Tat via their LDLR. Through its interaction with nuclear HATs, Tat is potentially able to control the acetylation-dependent cellular gene expression. Modulates the expression of many cellular genes involved in cell survival, proliferation or in coding for cytokines or cytokine receptors. Tat plays a role in T-cell and neurons apoptosis. Tat induced neurotoxicity and apoptosis probably contribute to neuroAIDS. Circulating Tat also acts as a chemokine-like and/or growth factor-like molecule that binds to specific receptors on the surface of the cells, affecting many cellular pathways. In the vascular system, Tat binds to ITGAV/ITGB3 and ITGA5/ITGB1 integrins dimers at the surface of endothelial cells and competes with bFGF for heparin-binding sites, leading to an excess of soluble bFGF. This is Protein Tat from Homo sapiens (Human).